Reading from the N-terminus, the 247-residue chain is Adiponectin (247 aa).

The N-terminal stretch at 1 to 17 (MLLLQALLFLLILPSHA) is a signal peptide. O-linked (GalNAc...) threonine glycosylation is found at Thr-23 and Thr-24. 5-hydroxylysine is present on Lys-36. S-(2-succinyl)cysteine is present on Cys-39. The segment at 44-105 (AGIPGHPGHN…GFPGTPGRKG (62 aa)) is disordered. The Collagen-like domain occupies 45-110 (GIPGHPGHNG…PGRKGEPGEA (66 aa)). A 4-hydroxyproline mark is found at Pro-47, Pro-50, and Pro-56. Basic and acidic residues predominate over residues 58–73 (RDGRDGTPGEKGEKGD). 3 positions are modified to 5-hydroxylysine; alternate: Lys-68, Lys-71, and Lys-80. O-linked (Gal...) hydroxylysine; alternate glycans are attached at residues Lys-68, Lys-71, and Lys-80. Pro-94 carries the 4-hydroxyproline modification. Lys-104 carries the 5-hydroxylysine; alternate modification. Lys-104 is a glycosylation site (O-linked (Gal...) hydroxylysine; alternate). The C1q domain maps to 111 to 247 (AYVYRSAFSV…TGFLLYHDTN (137 aa)).

Homomultimer. Forms trimers, hexamers and 12- to 18-mers. The trimers (low molecular weight complexes / LMW) are assembled via non-covalent interactions of the collagen-like domains in a triple helix and hydrophobic interactions within the globular C1q domain. Several trimers can associate to form disulfide-linked hexamers (middle molecular weight complexes / MMW) and larger complexes (higher molecular weight / HMW). The HMW-complex assembly is also modulated by the degree of lysine hydroxylation and glycosylation. LMW, MMW and HMW complexes bind to HBEGF, MMW and HMW complexes bind to PDGFB, and HMW complex binds to FGF2. Interacts with CTRP9 via the C1q domain (heterotrimeric complex). HMW complexes are more extensively glycosylated than smaller oligomers. Hydroxylation and glycosylation of the lysine residues within the collagen-like domain of adiponectin seem to be critically involved in regulating the formation and/or secretion of HMW complexes and consequently contribute to the insulin-sensitizing activity of adiponectin in hepatocytes. In terms of processing, O-glycosylated. Not N-glycosylated O-linked glycans on hydroxylysine residues consist of Glc-Gal disaccharides bound to the oxygen atom of post-translationally added hydroxyl groups. O-linked glycosylation in the N-terminal is disialylated with the structure Neu5Acalpha2-&gt;8Neu5Acalpha2-&gt;3Gal. Sialylated by alpha 2,8-sialyltransferase III. Post-translationally, succination of Cys-39 by the Krebs cycle intermediate fumarate, which leads to S-(2-succinyl)cysteine residues, inhibits polymerization and secretion of adiponectin. Adiponectin is a major target for succination in both adipocytes and adipose tissue of diabetic mice. It was proposed that succination of proteins is a biomarker of mitochondrial stress and accumulation of Krebs cycle intermediates in adipose tissue in diabetes and that succination of adiponectin may contribute to the decrease in plasma adiponectin in diabetes. Synthesized exclusively by adipocytes and secreted into plasma.

It localises to the secreted. Its activity is regulated as follows. Polymerization and secretion of adiponectin is inhibited by succination of cysteine residues by the Krebs cycle intermediate fumarate, which leads to S-(2-succinyl)cysteine residues. Important adipokine involved in the control of fat metabolism and insulin sensitivity, with direct anti-diabetic, anti-atherogenic and anti-inflammatory activities. Stimulates AMPK phosphorylation and activation in the liver and the skeletal muscle, enhancing glucose utilization and fatty-acid combustion. Antagonizes TNF-alpha by negatively regulating its expression in various tissues such as liver and macrophages, and also by counteracting its effects. Inhibits endothelial NF-kappa-B signaling through a cAMP-dependent pathway. May play a role in cell growth, angiogenesis and tissue remodeling by binding and sequestering various growth factors with distinct binding affinities, depending on the type of complex, LMW, MMW or HMW. This Mus musculus (Mouse) protein is Adiponectin (Adipoq).